The chain runs to 177 residues: Large ribosomal subunit protein uL6 (177 aa).

It belongs to the universal ribosomal protein uL6 family. Part of the 50S ribosomal subunit.

This protein binds to the 23S rRNA, and is important in its secondary structure. It is located near the subunit interface in the base of the L7/L12 stalk, and near the tRNA binding site of the peptidyltransferase center. The protein is Large ribosomal subunit protein uL6 of Rickettsia prowazekii (strain Madrid E).